A 205-amino-acid chain; its full sequence is Holliday junction branch migration complex subunit RuvA (205 aa).

Residues 1 to 64 (MIGKLKGVVD…EDMIRLYGFR (64 aa)) are domain I. Residues 65-143 (SDAEREWFRL…AFAPVDPALI (79 aa)) form a domain II region. The tract at residues 144–152 (RLAGAVEER) is flexible linker. The segment at 153 to 205 (TAPQPVADAISALVNLGYPQIQASAAVAAALQGAGEGAEAKTLIRLGLRELAR) is domain III.

The protein belongs to the RuvA family. As to quaternary structure, homotetramer. Forms an RuvA(8)-RuvB(12)-Holliday junction (HJ) complex. HJ DNA is sandwiched between 2 RuvA tetramers; dsDNA enters through RuvA and exits via RuvB. An RuvB hexamer assembles on each DNA strand where it exits the tetramer. Each RuvB hexamer is contacted by two RuvA subunits (via domain III) on 2 adjacent RuvB subunits; this complex drives branch migration. In the full resolvosome a probable DNA-RuvA(4)-RuvB(12)-RuvC(2) complex forms which resolves the HJ.

The protein resides in the cytoplasm. In terms of biological role, the RuvA-RuvB-RuvC complex processes Holliday junction (HJ) DNA during genetic recombination and DNA repair, while the RuvA-RuvB complex plays an important role in the rescue of blocked DNA replication forks via replication fork reversal (RFR). RuvA specifically binds to HJ cruciform DNA, conferring on it an open structure. The RuvB hexamer acts as an ATP-dependent pump, pulling dsDNA into and through the RuvAB complex. HJ branch migration allows RuvC to scan DNA until it finds its consensus sequence, where it cleaves and resolves the cruciform DNA. This is Holliday junction branch migration complex subunit RuvA from Methylobacterium nodulans (strain LMG 21967 / CNCM I-2342 / ORS 2060).